The chain runs to 432 residues: Histidine--tRNA ligase (432 aa).

Belongs to the class-II aminoacyl-tRNA synthetase family.

The protein localises to the cytoplasm. The catalysed reaction is tRNA(His) + L-histidine + ATP = L-histidyl-tRNA(His) + AMP + diphosphate + H(+). The chain is Histidine--tRNA ligase from Halobacterium salinarum (strain ATCC 29341 / DSM 671 / R1).